A 68-amino-acid chain; its full sequence is MAKSVFNFFHFEILEYLNRFVYHSQYFLPYYCSLEVLGKSRKNWTFQYWCLYITTDKKIIKKKDFYHR.

This is an uncharacterized protein from Saccharomyces cerevisiae (strain ATCC 204508 / S288c) (Baker's yeast).